Here is an 826-residue protein sequence, read N- to C-terminus: Receptor-like protein 18 (826 aa).

At Met1 to Trp780 the chain is on the extracellular side. LRR repeat units lie at residues Val5 to Leu31, Gln32 to Asn54, Phe55 to Leu79, His81 to Leu103, Ser104 to Leu127, Ser128 to Asn150, and Leu151 to Gln177. N-linked (GlcNAc...) asparagine glycosylation is found at Asn12 and Asn54. Asn102, Asn126, and Asn150 each carry an N-linked (GlcNAc...) asparagine glycan. Residues Leu178–Asn198 form an LRR 8; degenerate repeat. Asn198, Asn201, and Asn219 each carry an N-linked (GlcNAc...) asparagine glycan. LRR repeat units follow at residues Leu199–Leu223, Asn225–Ile247, Pro248–Ser271, Leu273–Leu294, Asn296–Asp318, Leu319–Ser343, Phe345–Asn368, Pro382–Gln405, Gln406–Leu429, Pro430–Ser452, Gln455–Ala478, Phe479–Ser500, Glu501–Ile524, Ser525–Glu550, Gln552–Phe570, Pro571–Asn594, Leu637–Leu661, Lys662–Leu685, Arg686–Leu709, and Tyr711–Thr734. N-linked (GlcNAc...) asparagine glycosylation is present at Asn268. 4 N-linked (GlcNAc...) asparagine glycosylation sites follow: Asn312, Asn331, Asn362, and Asn389. N-linked (GlcNAc...) asparagine glycans are attached at residues Asn436, Asn439, Asn467, and Asn498. N-linked (GlcNAc...) asparagine glycosylation is present at Asn538. Residues Asn584 and Asn594 are each glycosylated (N-linked (GlcNAc...) asparagine). Residue Asn668 is glycosylated (N-linked (GlcNAc...) asparagine). N-linked (GlcNAc...) asparagine glycosylation is found at Asn716 and Asn736. A helical membrane pass occupies residues Ile781–Leu801. Residues Val802–Arg826 lie on the Cytoplasmic side of the membrane.

Belongs to the RLP family.

The protein resides in the cell membrane. The chain is Receptor-like protein 18 from Arabidopsis thaliana (Mouse-ear cress).